Consider the following 287-residue polypeptide: MEMO1 family protein MJ0403 (287 aa).

The protein belongs to the MEMO1 family.

The chain is MEMO1 family protein MJ0403 from Methanocaldococcus jannaschii (strain ATCC 43067 / DSM 2661 / JAL-1 / JCM 10045 / NBRC 100440) (Methanococcus jannaschii).